The sequence spans 441 residues: Protein SPMIP7 (441 aa).

As to expression, testis specific. Expressed at the spermatid stage.

Essential for normal spermatogenesis. The protein is Protein SPMIP7 (Spmip7) of Mus musculus (Mouse).